Consider the following 110-residue polypeptide: Ribonuclease P protein component 4 (110 aa).

Positions 65, 68, 94, and 97 each coordinate Zn(2+).

Belongs to the eukaryotic/archaeal RNase P protein component 4 family. In terms of assembly, consists of a catalytic RNA component and at least 5 protein subunits. The cofactor is Zn(2+).

Its subcellular location is the cytoplasm. It carries out the reaction Endonucleolytic cleavage of RNA, removing 5'-extranucleotides from tRNA precursor.. Part of ribonuclease P, a protein complex that generates mature tRNA molecules by cleaving their 5'-ends. This is Ribonuclease P protein component 4 from Methanococcus maripaludis (strain DSM 14266 / JCM 13030 / NBRC 101832 / S2 / LL).